A 233-amino-acid chain; its full sequence is Large ribosomal subunit protein uL1 (233 aa).

The protein belongs to the universal ribosomal protein uL1 family. Part of the 50S ribosomal subunit.

Functionally, binds directly to 23S rRNA. The L1 stalk is quite mobile in the ribosome, and is involved in E site tRNA release. Its function is as follows. Protein L1 is also a translational repressor protein, it controls the translation of the L11 operon by binding to its mRNA. The chain is Large ribosomal subunit protein uL1 from Geobacillus thermodenitrificans (strain NG80-2).